The sequence spans 106 residues: Nucleoid-associated protein Nwi_0368 (106 aa).

It belongs to the YbaB/EbfC family. In terms of assembly, homodimer.

Its subcellular location is the cytoplasm. The protein resides in the nucleoid. Binds to DNA and alters its conformation. May be involved in regulation of gene expression, nucleoid organization and DNA protection. The polypeptide is Nucleoid-associated protein Nwi_0368 (Nitrobacter winogradskyi (strain ATCC 25391 / DSM 10237 / CIP 104748 / NCIMB 11846 / Nb-255)).